We begin with the raw amino-acid sequence, 193 residues long: Pyridoxal 5'-phosphate synthase subunit PdxT (193 aa).

Residue 48–50 (GES) coordinates L-glutamine. Cys80 acts as the Nucleophile in catalysis. L-glutamine contacts are provided by residues Arg112 and 140-141 (IR). Active-site charge relay system residues include His176 and Glu178.

The protein belongs to the glutaminase PdxT/SNO family. In terms of assembly, in the presence of PdxS, forms a dodecamer of heterodimers. Only shows activity in the heterodimer.

The enzyme catalyses aldehydo-D-ribose 5-phosphate + D-glyceraldehyde 3-phosphate + L-glutamine = pyridoxal 5'-phosphate + L-glutamate + phosphate + 3 H2O + H(+). The catalysed reaction is L-glutamine + H2O = L-glutamate + NH4(+). The protein operates within cofactor biosynthesis; pyridoxal 5'-phosphate biosynthesis. Catalyzes the hydrolysis of glutamine to glutamate and ammonia as part of the biosynthesis of pyridoxal 5'-phosphate. The resulting ammonia molecule is channeled to the active site of PdxS. The sequence is that of Pyridoxal 5'-phosphate synthase subunit PdxT from Mycolicibacterium smegmatis (strain ATCC 700084 / mc(2)155) (Mycobacterium smegmatis).